The primary structure comprises 326 residues: Glycerol-3-phosphate dehydrogenase [NAD(P)+] (326 aa).

Trp15, Arg35, and Lys107 together coordinate NADPH. Sn-glycerol 3-phosphate is bound by residues Lys107, Gly135, and Ser137. Residue Ala139 participates in NADPH binding. Residues Lys190, Asp243, Ser253, Arg254, and Asn255 each contribute to the sn-glycerol 3-phosphate site. Lys190 (proton acceptor) is an active-site residue. Arg254 is a binding site for NADPH. Positions 273 and 275 each coordinate NADPH.

This sequence belongs to the NAD-dependent glycerol-3-phosphate dehydrogenase family.

It localises to the cytoplasm. It carries out the reaction sn-glycerol 3-phosphate + NAD(+) = dihydroxyacetone phosphate + NADH + H(+). It catalyses the reaction sn-glycerol 3-phosphate + NADP(+) = dihydroxyacetone phosphate + NADPH + H(+). The protein operates within membrane lipid metabolism; glycerophospholipid metabolism. In terms of biological role, catalyzes the reduction of the glycolytic intermediate dihydroxyacetone phosphate (DHAP) to sn-glycerol 3-phosphate (G3P), the key precursor for phospholipid synthesis. The sequence is that of Glycerol-3-phosphate dehydrogenase [NAD(P)+] from Bradyrhizobium sp. (strain BTAi1 / ATCC BAA-1182).